Here is an 866-residue protein sequence, read N- to C-terminus: Speckle targeted PIP5K1A-regulated poly(A) polymerase (866 aa).

Residues 16–46 form a Matrin-type zinc finger; it reads FRCCLCDVTTANRPSLDAHLKGRKHRDLVQL. Residues 56–128 enclose the RRM domain; the sequence is RSVFVSGFPR…HTLRVRPREQ (73 aa). The disordered stretch occupies residues 116 to 147; sequence LGGHTLRVRPREQKEFQSPASKSPKGVDSNSH. ATP is bound at residue Ser-205. Residues Asp-216 and Asp-218 each coordinate Mg(2+). Residues Asp-216 and Asp-218 each coordinate UTP. 2 disordered regions span residues 223–249 and 267–321; these read LGDM…STLA and LSPT…EGKH. A compositionally biased stretch (polar residues) spans 282 to 304; the sequence is TPSSLAPQTPDSALGSDTVTSPQ. Residue Asn-393 participates in ATP binding. Residues Asn-393, Arg-415, Tyr-433, and His-550 each coordinate UTP. In terms of domain architecture, PAP-associated spans 492-550; the sequence is LSSLLAQFFSCVSCWDLSGSLLSLREGQALMVAGGLPSDLWEGLRLGPMNLQDPFDLSH. Residues 599 to 866 form a KA1; binds the bulging loops of U6 snRNA but is dispensable for terminal uridylyltransferase activity region; sequence SSPSSLLSAK…IPQALKNLLK (268 aa). Disordered stretches follow at residues 638-687, 728-755, and 773-792; these read QGTK…DHSE, EQNP…PSSV, and RRRF…STGA. The segment covering 669-687 has biased composition (basic and acidic residues); that stretch reads KSCEEGKEEPQGCAGDHSE. Phosphoserine is present on residues Ser-686 and Ser-741.

This sequence belongs to the DNA polymerase type-B-like family. Associates with the cleavage and polyadenylation specificity factor (CPSF) complex. Interacts with CPSF1 and CPSF3; the interaction is direct. Interacts with PIP5K1A. The cofactor is Mg(2+). Mn(2+) serves as cofactor. Phosphorylated by CK1 in the proline-rich (Pro-rich) region.

The protein resides in the nucleus. Its subcellular location is the nucleolus. It is found in the nucleus speckle. The enzyme catalyses RNA(n) + UTP = RNA(n)-3'-uridine ribonucleotide + diphosphate. It catalyses the reaction RNA(n) + ATP = RNA(n)-3'-adenine ribonucleotide + diphosphate. Its activity is regulated as follows. Adenylyltransferase activity is specifically phosphatidylinositol 4,5-bisphosphate (PtdIns(4,5)P2). Poly(A) polymerase that creates the 3'-poly(A) tail of specific pre-mRNAs. Localizes to nuclear speckles together with PIP5K1A and mediates polyadenylation of a select set of mRNAs, such as HMOX1. In addition to polyadenylation, it is also required for the 3'-end cleavage of pre-mRNAs: binds to the 3'UTR of targeted pre-mRNAs and promotes the recruitment and assembly of the CPSF complex on the 3'UTR of pre-mRNAs. In addition to adenylyltransferase activity, also has uridylyltransferase activity. However, the ATP ratio is higher than UTP in cells, suggesting that it functions primarily as a poly(A) polymerase. Acts as a specific terminal uridylyltransferase for U6 snRNA in vitro: responsible for a controlled elongation reaction that results in the restoration of the four 3'-terminal UMP-residues found in newly transcribed U6 snRNA. Not involved in replication-dependent histone mRNA degradation. The protein is Speckle targeted PIP5K1A-regulated poly(A) polymerase (Tut1) of Rattus norvegicus (Rat).